A 327-amino-acid polypeptide reads, in one-letter code: Undecaprenyl-phosphate 4-deoxy-4-formamido-L-arabinose transferase (327 aa).

The next 2 helical transmembrane spans lie at 236–256 (LSLV…LLVV) and 270–290 (VFTL…GMGL).

The protein belongs to the glycosyltransferase 2 family.

The protein localises to the cell inner membrane. It catalyses the reaction UDP-4-deoxy-4-formamido-beta-L-arabinose + di-trans,octa-cis-undecaprenyl phosphate = 4-deoxy-4-formamido-alpha-L-arabinopyranosyl di-trans,octa-cis-undecaprenyl phosphate + UDP. It participates in glycolipid biosynthesis; 4-amino-4-deoxy-alpha-L-arabinose undecaprenyl phosphate biosynthesis; 4-amino-4-deoxy-alpha-L-arabinose undecaprenyl phosphate from UDP-4-deoxy-4-formamido-beta-L-arabinose and undecaprenyl phosphate: step 1/2. Its pathway is bacterial outer membrane biogenesis; lipopolysaccharide biosynthesis. In terms of biological role, catalyzes the transfer of 4-deoxy-4-formamido-L-arabinose from UDP to undecaprenyl phosphate. The modified arabinose is attached to lipid A and is required for resistance to polymyxin and cationic antimicrobial peptides. The protein is Undecaprenyl-phosphate 4-deoxy-4-formamido-L-arabinose transferase of Yersinia enterocolitica serotype O:8 / biotype 1B (strain NCTC 13174 / 8081).